A 240-amino-acid polypeptide reads, in one-letter code: 4-hydroxy-tetrahydrodipicolinate reductase (240 aa).

Residues 79-81 and 103-106 each bind NAD(+); these read ATT and SANM. The Proton donor/acceptor role is filled by His-135. Residue His-136 coordinates (S)-2,3,4,5-tetrahydrodipicolinate. Lys-139 acts as the Proton donor in catalysis. 145–146 is a (S)-2,3,4,5-tetrahydrodipicolinate binding site; the sequence is GT.

Belongs to the DapB family.

It localises to the cytoplasm. The catalysed reaction is (S)-2,3,4,5-tetrahydrodipicolinate + NAD(+) + H2O = (2S,4S)-4-hydroxy-2,3,4,5-tetrahydrodipicolinate + NADH + H(+). It catalyses the reaction (S)-2,3,4,5-tetrahydrodipicolinate + NADP(+) + H2O = (2S,4S)-4-hydroxy-2,3,4,5-tetrahydrodipicolinate + NADPH + H(+). The protein operates within amino-acid biosynthesis; L-lysine biosynthesis via DAP pathway; (S)-tetrahydrodipicolinate from L-aspartate: step 4/4. In terms of biological role, catalyzes the conversion of 4-hydroxy-tetrahydrodipicolinate (HTPA) to tetrahydrodipicolinate. This is 4-hydroxy-tetrahydrodipicolinate reductase from Staphylococcus saprophyticus subsp. saprophyticus (strain ATCC 15305 / DSM 20229 / NCIMB 8711 / NCTC 7292 / S-41).